The chain runs to 1273 residues: DNA polymerase 037L (1273 aa).

A coiled-coil region spans residues 679–837; that stretch reads IRKNAITEEL…ENKSKEDIDE (159 aa).

This sequence belongs to the DNA polymerase type-B family.

It carries out the reaction DNA(n) + a 2'-deoxyribonucleoside 5'-triphosphate = DNA(n+1) + diphosphate. In terms of biological role, DNA-directed DNA polymerase involved in viral DNA replication. The polypeptide is DNA polymerase 037L (DPOL) (Invertebrate iridescent virus 6 (IIV-6)).